The chain runs to 408 residues: Phosphoglycerate kinase (408 aa).

Substrate-binding positions include 24–26, R40, 63–66, R122, and R166; these read DLN and HLGR. Residues K216, G304, E335, and 364 to 367 contribute to the ATP site; that span reads GGDS.

It belongs to the phosphoglycerate kinase family. As to quaternary structure, monomer.

It localises to the cytoplasm. It carries out the reaction (2R)-3-phosphoglycerate + ATP = (2R)-3-phospho-glyceroyl phosphate + ADP. It participates in carbohydrate degradation; glycolysis; pyruvate from D-glyceraldehyde 3-phosphate: step 2/5. The polypeptide is Phosphoglycerate kinase (Mycolicibacterium smegmatis (strain ATCC 700084 / mc(2)155) (Mycobacterium smegmatis)).